The sequence spans 432 residues: Proline--tRNA ligase (432 aa).

It belongs to the class-II aminoacyl-tRNA synthetase family. ProS type 2 subfamily. As to quaternary structure, homodimer.

Its subcellular location is the cytoplasm. It carries out the reaction tRNA(Pro) + L-proline + ATP = L-prolyl-tRNA(Pro) + AMP + diphosphate. Functionally, catalyzes the attachment of proline to tRNA(Pro) in a two-step reaction: proline is first activated by ATP to form Pro-AMP and then transferred to the acceptor end of tRNA(Pro). The sequence is that of Proline--tRNA ligase from Rickettsia bellii (strain OSU 85-389).